Reading from the N-terminus, the 789-residue chain is Disintegrin and metalloproteinase domain-containing protein 7 (789 aa).

The first 25 residues, 1-25 (MFPTGIFLMSVLISQMQGRGIVGVE), serve as a signal peptide directing secretion. A propeptide spanning residues 26–176 (GQELVHPKKL…NYSCEGLNFT (151 aa)) is cleaved from the precursor. 3 N-linked (GlcNAc...) asparagine glycosylation sites follow: Asn-84, Asn-167, and Asn-174. Topologically, residues 177-668 (KKSTLIDAKI…WGEALNLTSV (492 aa)) are extracellular. One can recognise a Peptidase M12B domain in the interval 199–393 (KFIELFVVAD…QKPACILNNP (195 aa)). Intrachain disulfides connect Cys-310-Cys-388, Cys-350-Cys-372, Cys-352-Cys-357, and Cys-459-Cys-479. One can recognise a Disintegrin domain in the interval 401–487 (YPFCGNKKVD…ECPKDESQAN (87 aa)). Asn-583, Asn-628, and Asn-664 each carry an N-linked (GlcNAc...) asparagine glycan. The chain crosses the membrane as a helical span at residues 669–689 (SIMVVVLVMVIIGVGLVILLI). Residues 690 to 789 (RYQKCIKMKQ…DSQSDCTRLG (100 aa)) are Cytoplasmic-facing. The span at 762-771 (DPRGIADPKQ) shows a compositional bias: basic and acidic residues. The segment at 762–789 (DPRGIADPKQNDNMNLNLDSQSDCTRLG) is disordered. Positions 772-789 (NDNMNLNLDSQSDCTRLG) are enriched in polar residues.

In terms of assembly, interacts with ITM2B in sperm; the interaction increases following capacitation. Interacts with HSPA5 and CANX. Expressed specifically in the caput region of the epididymis (at protein level).

The protein resides in the membrane. Its function is as follows. Required for normal male fertility via maintenance of epithelial cell morphology in the caput epididymis and subsequently correct epididymis lumen structure required for sperm development. Plays a role in sperm motility, flagella morphology and tyrosine phosphorylation during sperm capacitance. Plays a role in normal expression levels of HSPA5, ITM2B and ADAM2 in sperm both prior to and post-capacitation. This is a non catalytic metalloprotease-like protein. This is Disintegrin and metalloproteinase domain-containing protein 7 from Rattus norvegicus (Rat).